We begin with the raw amino-acid sequence, 310 residues long: Aspartate carbamoyltransferase catalytic subunit (310 aa).

R60 and T61 together coordinate carbamoyl phosphate. Residue K88 participates in L-aspartate binding. Residues R110, H138, and Q141 each contribute to the carbamoyl phosphate site. 2 residues coordinate L-aspartate: R171 and R225. The carbamoyl phosphate site is built by G266 and P267.

It belongs to the aspartate/ornithine carbamoyltransferase superfamily. ATCase family. In terms of assembly, heterododecamer (2C3:3R2) of six catalytic PyrB chains organized as two trimers (C3), and six regulatory PyrI chains organized as three dimers (R2).

It catalyses the reaction carbamoyl phosphate + L-aspartate = N-carbamoyl-L-aspartate + phosphate + H(+). The protein operates within pyrimidine metabolism; UMP biosynthesis via de novo pathway; (S)-dihydroorotate from bicarbonate: step 2/3. In terms of biological role, catalyzes the condensation of carbamoyl phosphate and aspartate to form carbamoyl aspartate and inorganic phosphate, the committed step in the de novo pyrimidine nucleotide biosynthesis pathway. The sequence is that of Aspartate carbamoyltransferase catalytic subunit from Christiangramia forsetii (strain DSM 17595 / CGMCC 1.15422 / KT0803) (Gramella forsetii).